A 154-amino-acid polypeptide reads, in one-letter code: 6,7-dimethyl-8-ribityllumazine synthase (154 aa).

5-amino-6-(D-ribitylamino)uracil-binding positions include phenylalanine 22, 56–58 (AFE), and 80–82 (AVI). 85–86 (AT) contacts (2S)-2-hydroxy-3-oxobutyl phosphate. Residue histidine 88 is the Proton donor of the active site. Phenylalanine 113 contributes to the 5-amino-6-(D-ribitylamino)uracil binding site. Arginine 127 lines the (2S)-2-hydroxy-3-oxobutyl phosphate pocket.

Belongs to the DMRL synthase family. Forms an icosahedral capsid composed of 60 subunits, arranged as a dodecamer of pentamers.

The enzyme catalyses (2S)-2-hydroxy-3-oxobutyl phosphate + 5-amino-6-(D-ribitylamino)uracil = 6,7-dimethyl-8-(1-D-ribityl)lumazine + phosphate + 2 H2O + H(+). The protein operates within cofactor biosynthesis; riboflavin biosynthesis; riboflavin from 2-hydroxy-3-oxobutyl phosphate and 5-amino-6-(D-ribitylamino)uracil: step 1/2. In terms of biological role, catalyzes the formation of 6,7-dimethyl-8-ribityllumazine by condensation of 5-amino-6-(D-ribitylamino)uracil with 3,4-dihydroxy-2-butanone 4-phosphate. This is the penultimate step in the biosynthesis of riboflavin. The polypeptide is 6,7-dimethyl-8-ribityllumazine synthase (Geobacillus sp. (strain WCH70)).